Here is a 109-residue protein sequence, read N- to C-terminus: ATP-dependent Clp protease adapter protein ClpS (109 aa).

The disordered stretch occupies residues 1-21 (MAERKQGGQNNGAGSSVITEV).

This sequence belongs to the ClpS family. In terms of assembly, binds to the N-terminal domain of the chaperone ClpA.

Involved in the modulation of the specificity of the ClpAP-mediated ATP-dependent protein degradation. The chain is ATP-dependent Clp protease adapter protein ClpS from Caulobacter sp. (strain K31).